Consider the following 494-residue polypeptide: DnaJ homolog subfamily C member 7 (494 aa).

Residue alanine 2 is modified to N-acetylalanine. TPR repeat units follow at residues 28–61 (AETF…CPKN), 62–95 (ASYY…DDSF), 96–129 (VRGH…DHKN), 142–175 (VMEY…APAC), 177–209 (RFKI…DSTN), 210–243 (ADAL…APDH), 256–289 (LKAK…DPNN), 294–327 (AKLY…DDTY), and 328–361 (IKAY…EKTK). A J domain is found at 381-451 (DYYKILGVDK…KKKTRYDSGQ (71 aa)). Serine 393 carries the post-translational modification Phosphoserine.

In terms of assembly, associates with complexes containing chaperones HSP70 and HSP90. Interacts with the GAP domain of NF1. Interacts with HSP90AA1. Interacts with HSPA1A/B; the interaction is enhanced by ATP. Interacts with HSP90AB1. Interacts with PGR. Interacts with RAD9A; the interaction is interrupted by UV and heat shock treatments. Interacts with HUS1 and RAD1. Interacts with NR1I3. The DNAJC7-NR1I3 complex may also include HSP90. Interacts with HSPA8.

It localises to the cytoplasm. It is found in the nucleus. Its subcellular location is the cytoskeleton. Functionally, acts as a co-chaperone regulating the molecular chaperones HSP70 and HSP90 in folding of steroid receptors, such as the glucocorticoid receptor and the progesterone receptor. Proposed to act as a recycling chaperone by facilitating the return of chaperone substrates to early stages of chaperoning if further folding is required. In vitro, induces ATP-independent dissociation of HSP90 but not of HSP70 from the chaperone-substrate complexes. Recruits NR1I3 to the cytoplasm. The protein is DnaJ homolog subfamily C member 7 (DNAJC7) of Homo sapiens (Human).